Consider the following 247-residue polypeptide: Peroxisomal membrane protein 11A (247 aa).

Over 1–83 the chain is Cytoplasmic; that stretch reads MDAFTRFTNQ…SIHATDLVPR (83 aa). The chain crosses the membrane as a helical span at residues 84-105; the sequence is LCLTLANLNRVIYFICDTILWV. The Lumenal portion of the chain corresponds to 106–219; sequence RSVGLTSGIN…DQLGIYKSNP (114 aa). Residues 220–239 form a helical membrane-spanning segment; it reads GIIGLGGLVSSIAGMITVAY. A required for homodimerization, interaction with PEX11G, and peroxisomal localization region spans residues 220–239; it reads GIIGLGGLVSSIAGMITVAY. Over 240–247 the chain is Cytoplasmic; it reads PQMKLKTR.

It belongs to the peroxin-11 family. Homodimer. Heterodimer with PEX11G. Probably interacts with COPB2 and COPA. Interacts with PEX19. Interacts with FIS1. In terms of processing, seems not to be N-glycosylated.

The protein localises to the peroxisome membrane. May be involved in peroxisomal proliferation and may regulate peroxisomes division. May mediate binding of coatomer proteins to the peroxisomal membrane. Promotes membrane protrusion and elongation on the peroxisomal surface. The chain is Peroxisomal membrane protein 11A (PEX11A) from Homo sapiens (Human).